A 318-amino-acid chain; its full sequence is Ferredoxin--NADP reductase (318 aa).

Residues D33, Q41, Y46, V84, F115, D276, and T316 each coordinate FAD.

The protein belongs to the ferredoxin--NADP reductase type 2 family. As to quaternary structure, homodimer. The cofactor is FAD.

The enzyme catalyses 2 reduced [2Fe-2S]-[ferredoxin] + NADP(+) + H(+) = 2 oxidized [2Fe-2S]-[ferredoxin] + NADPH. This chain is Ferredoxin--NADP reductase, found in Lactobacillus johnsonii (strain CNCM I-12250 / La1 / NCC 533).